A 378-amino-acid chain; its full sequence is Neutral protease 2 homolog ARB_04336 (378 aa).

An N-terminal signal peptide occupies residues 1-19 (MKFFTALAAVGALLAPAVA). Positions 20-186 (LPTPASEASH…DYFSKGLDKR (167 aa)) are excised as a propeptide. Intrachain disulfides connect C192-C262 and C269-C287. H311 lines the Zn(2+) pocket. Residue E312 is part of the active site. Residues H315 and D326 each coordinate Zn(2+).

It belongs to the peptidase M35 family. Zn(2+) serves as cofactor.

The protein resides in the secreted. It catalyses the reaction Preferential cleavage of bonds with hydrophobic residues in P1'. Also 3-Asn-|-Gln-4 and 8-Gly-|-Ser-9 bonds in insulin B chain.. Its function is as follows. Secreted metalloproteinase that allows assimilation of proteinaceous substrates. Shows high activities on basic nuclear substrates such as histone and protamine. May be involved in virulence. The polypeptide is Neutral protease 2 homolog ARB_04336 (Arthroderma benhamiae (strain ATCC MYA-4681 / CBS 112371) (Trichophyton mentagrophytes)).